The chain runs to 322 residues: MESSTAFYDYHDKLSLLCENNVIFFSTISTIVLYSLVFLLSLVGNSLVLWVLVKYENLESLTNIFILNLCLSDLMFSCLLPVLISAQWSWFLGDFFCKFFNMIFGISLYSSIFFLTIMTIHRYLSVVSPISTLGIHTLRCRVLVTSCVWAASILFSIPDAVFHKVISLNCKYSEHHGFLASVYQHNIFFLLSMGIILFCYVQILRTLFRTRSRQRHRTVRLIFTVVVAYFLSWAPYNLTLFLKTGIIQQSCESLQQLDIAMIICRHLAFSHCCFNPVLYVFVGIKFRRHLKHLFQQVWLCRKTSSTVPCSPGTFTYEGPSFY.

Topologically, residues 1–27 (MESSTAFYDYHDKLSLLCENNVIFFST) are extracellular. Residues 28–55 (ISTIVLYSLVFLLSLVGNSLVLWVLVKY) traverse the membrane as a helical segment. Topologically, residues 56–65 (ENLESLTNIF) are cytoplasmic. The helical transmembrane segment at 66-85 (ILNLCLSDLMFSCLLPVLIS) threads the bilayer. The Extracellular segment spans residues 86–98 (AQWSWFLGDFFCK). C97 and C170 are joined by a disulfide. The chain crosses the membrane as a helical span at residues 99–120 (FFNMIFGISLYSSIFFLTIMTI). The Cytoplasmic segment spans residues 121–137 (HRYLSVVSPISTLGIHT). The helical transmembrane segment at 138-162 (LRCRVLVTSCVWAASILFSIPDAVF) threads the bilayer. The Extracellular portion of the chain corresponds to 163–185 (HKVISLNCKYSEHHGFLASVYQH). The helical transmembrane segment at 186 to 204 (NIFFLLSMGIILFCYVQIL) threads the bilayer. Residues 205–220 (RTLFRTRSRQRHRTVR) lie on the Cytoplasmic side of the membrane. The helical transmembrane segment at 221–243 (LIFTVVVAYFLSWAPYNLTLFLK) threads the bilayer. Residues 244-259 (TGIIQQSCESLQQLDI) lie on the Extracellular side of the membrane. A helical membrane pass occupies residues 260–283 (AMIICRHLAFSHCCFNPVLYVFVG). Over 284–322 (IKFRRHLKHLFQQVWLCRKTSSTVPCSPGTFTYEGPSFY) the chain is Cytoplasmic.

The protein belongs to the G-protein coupled receptor 1 family. As to expression, expressed by dendritic cells from the thymus, slpeen, subcutaneous lymph nodes and mesenteric lymph nodes.

The protein localises to the cell membrane. Functionally, receptor for chemokines SCYC1 and SCYC2. Subsequently transduces a signal by increasing the intracellular calcium ions level. Receptor for XCL1/Lymphotactin. The chain is Chemokine XC receptor 1 (Xcr1) from Mus musculus (Mouse).